The following is a 256-amino-acid chain: MRHSPRKRFGQNFLQDKYIINEILRAINPLADDNMLEIGPGLGALTQPLLQKLNRLTAIEIDTDLQNYLTRLPVSQGKLNLIPADALTVDFCQFGPHLRVVGNLPYNISTPLLIYLLKFITCIDDMHFMLQKEVVERIAATHGTKAYGRLSVMLQYHCEVEYLFDVPPEAFEPKPKVDSAIVRLTPYRVSPFESVNTEKLENIVAKAFAMRRKTLTNNLKGIISLSQLNDLGIDGGKRPEQISVAEYVQLAKFISN.

S-adenosyl-L-methionine is bound by residues asparagine 12, leucine 14, glycine 39, glutamate 60, aspartate 85, and asparagine 103.

Belongs to the class I-like SAM-binding methyltransferase superfamily. rRNA adenine N(6)-methyltransferase family. RsmA subfamily.

It localises to the cytoplasm. The catalysed reaction is adenosine(1518)/adenosine(1519) in 16S rRNA + 4 S-adenosyl-L-methionine = N(6)-dimethyladenosine(1518)/N(6)-dimethyladenosine(1519) in 16S rRNA + 4 S-adenosyl-L-homocysteine + 4 H(+). Its function is as follows. Specifically dimethylates two adjacent adenosines (A1518 and A1519) in the loop of a conserved hairpin near the 3'-end of 16S rRNA in the 30S particle. May play a critical role in biogenesis of 30S subunits. In Legionella pneumophila (strain Corby), this protein is Ribosomal RNA small subunit methyltransferase A.